Here is a 365-residue protein sequence, read N- to C-terminus: MKFIDEARIEAIAGNGGNGSASFRREKFVPFGGPDGGDGGRGGSVFAVADRNINTLIDFRYAKKHVARNGENGRGSDCYGAAGEDITLRMPVGTLITDMDTGEVIADLTEHGQRVCLAEGGMGGWGNLHFKSSTNRAPRQQVDGKPGERRMLKLELKVLADVGLLGMPNAGKSTFISHISNARPKVADYPFTTLHPNLGVVRVDHEQSFVVADIPGLIEGAAEGAGLGHQFLRHLQRTGLLLHIVDLAPFDEAVDPVAEARAIVNELKKYDETLYEKPRWLVLNKLDMVPEDERAAKVKDFLKRYKWKGPVFQISALTGEGCRELIYAIKDHLQAIKAEEAAALAEPDIRLDDRLHNVDQDQREA.

The Obg domain maps to 1–159 (MKFIDEARIE…RMLKLELKVL (159 aa)). The OBG-type G domain occupies 160–334 (ADVGLLGMPN…LIYAIKDHLQ (175 aa)). Residues 166 to 173 (GMPNAGKS), 191 to 195 (FTTLH), 213 to 216 (DIPG), 284 to 287 (NKLD), and 315 to 317 (SAL) contribute to the GTP site. 2 residues coordinate Mg(2+): serine 173 and threonine 193.

Belongs to the TRAFAC class OBG-HflX-like GTPase superfamily. OBG GTPase family. As to quaternary structure, monomer. Mg(2+) is required as a cofactor.

The protein localises to the cytoplasm. Functionally, an essential GTPase which binds GTP, GDP and possibly (p)ppGpp with moderate affinity, with high nucleotide exchange rates and a fairly low GTP hydrolysis rate. Plays a role in control of the cell cycle, stress response, ribosome biogenesis and in those bacteria that undergo differentiation, in morphogenesis control. This Cupriavidus taiwanensis (strain DSM 17343 / BCRC 17206 / CCUG 44338 / CIP 107171 / LMG 19424 / R1) (Ralstonia taiwanensis (strain LMG 19424)) protein is GTPase Obg.